A 233-amino-acid chain; its full sequence is 7-cyano-7-deazaguanine synthase (233 aa).

11 to 21 serves as a coordination point for ATP; that stretch reads LSGGLDSSTVL. Residues C195, C203, C206, and C209 each coordinate Zn(2+).

The protein belongs to the QueC family. The cofactor is Zn(2+).

It carries out the reaction 7-carboxy-7-deazaguanine + NH4(+) + ATP = 7-cyano-7-deazaguanine + ADP + phosphate + H2O + H(+). It participates in purine metabolism; 7-cyano-7-deazaguanine biosynthesis. Functionally, catalyzes the ATP-dependent conversion of 7-carboxy-7-deazaguanine (CDG) to 7-cyano-7-deazaguanine (preQ(0)). The protein is 7-cyano-7-deazaguanine synthase of Thermosynechococcus vestitus (strain NIES-2133 / IAM M-273 / BP-1).